Reading from the N-terminus, the 344-residue chain is Putative [LysW]-lysine/[LysW]-ornithine hydrolase (344 aa).

His-66 contributes to the Zn(2+) binding site. Asp-68 is a catalytic residue. Asp-90 serves as a coordination point for Zn(2+). Glu-117 (proton acceptor) is an active-site residue. Residues Glu-118, Glu-139, and His-297 each contribute to the Zn(2+) site.

This sequence belongs to the peptidase M20A family. LysK subfamily. Requires Zn(2+) as cofactor. It depends on Co(2+) as a cofactor.

The protein localises to the cytoplasm. It catalyses the reaction [amino-group carrier protein]-C-terminal-gamma-(L-lysyl)-L-glutamate + H2O = [amino-group carrier protein]-C-terminal-L-glutamate + L-lysine. It carries out the reaction [amino-group carrier protein]-C-terminal-gamma-(L-ornithyl)-L-glutamate + H2O = [amino-group carrier protein]-C-terminal-L-glutamate + L-ornithine. Its pathway is amino-acid biosynthesis; L-lysine biosynthesis via AAA pathway; L-lysine from L-alpha-aminoadipate (Thermus route): step 5/5. The protein operates within amino-acid biosynthesis; L-arginine biosynthesis. Functionally, catalyzes the release of L-lysine from [LysW]-gamma-L-lysine and the release of L-ornithine from [LysW]-L-ornithine. The chain is Putative [LysW]-lysine/[LysW]-ornithine hydrolase from Thermococcus kodakarensis (strain ATCC BAA-918 / JCM 12380 / KOD1) (Pyrococcus kodakaraensis (strain KOD1)).